The chain runs to 281 residues: Bis(5'-nucleosyl)-tetraphosphatase, symmetrical (281 aa).

This sequence belongs to the Ap4A hydrolase family.

It catalyses the reaction P(1),P(4)-bis(5'-adenosyl) tetraphosphate + H2O = 2 ADP + 2 H(+). Functionally, hydrolyzes diadenosine 5',5'''-P1,P4-tetraphosphate to yield ADP. This Pectobacterium carotovorum subsp. carotovorum (strain PC1) protein is Bis(5'-nucleosyl)-tetraphosphatase, symmetrical.